The primary structure comprises 433 residues: Glutamate-1-semialdehyde 2,1-aminomutase (433 aa).

The residue at position 273 (Lys-273) is an N6-(pyridoxal phosphate)lysine.

It belongs to the class-III pyridoxal-phosphate-dependent aminotransferase family. HemL subfamily. Homodimer. Requires pyridoxal 5'-phosphate as cofactor.

The protein resides in the cytoplasm. The catalysed reaction is (S)-4-amino-5-oxopentanoate = 5-aminolevulinate. Its pathway is porphyrin-containing compound metabolism; protoporphyrin-IX biosynthesis; 5-aminolevulinate from L-glutamyl-tRNA(Glu): step 2/2. The protein is Glutamate-1-semialdehyde 2,1-aminomutase of Polynucleobacter necessarius subsp. necessarius (strain STIR1).